The chain runs to 179 residues: MNRLKEKYQNEIVSSLTEKFNYPSVMAVPKIEKIVVNMGIGDAVQNAKVLDKAVEELQAITGQKPVITKAKKSIAGFKLREGMPIGAKVTLRGERMYDFLDKLVSVSLPRVRDFRGVSKKAFDGRGNYTLGVREQLIFPEIDYDKVDKVRGMDIVIVTTAKTDEEARELLTQVGMPFQK.

This sequence belongs to the universal ribosomal protein uL5 family. Part of the 50S ribosomal subunit; part of the 5S rRNA/L5/L18/L25 subcomplex. Contacts the 5S rRNA and the P site tRNA. Forms a bridge to the 30S subunit in the 70S ribosome.

In terms of biological role, this is one of the proteins that bind and probably mediate the attachment of the 5S RNA into the large ribosomal subunit, where it forms part of the central protuberance. In the 70S ribosome it contacts protein S13 of the 30S subunit (bridge B1b), connecting the 2 subunits; this bridge is implicated in subunit movement. Contacts the P site tRNA; the 5S rRNA and some of its associated proteins might help stabilize positioning of ribosome-bound tRNAs. This is Large ribosomal subunit protein uL5 from Shouchella clausii (strain KSM-K16) (Alkalihalobacillus clausii).